A 261-amino-acid chain; its full sequence is Small ribosomal subunit protein eS1A (261 aa).

Residues 1-18 (MTLGKNKRISKGGKRGKK) show a composition bias toward basic residues. The tract at residues 1–23 (MTLGKNKRISKGGKRGKKKTQET) is disordered.

Belongs to the eukaryotic ribosomal protein eS1 family. As to quaternary structure, component of the small ribosomal subunit. Mature ribosomes consist of a small (40S) and a large (60S) subunit. The 40S subunit contains about 33 different proteins and 1 molecule of RNA (18S). The 60S subunit contains about 49 different proteins and 3 molecules of RNA (25S, 5.8S and 5S).

Its subcellular location is the cytoplasm. The polypeptide is Small ribosomal subunit protein eS1A (Trypanosoma cruzi (strain CL Brener)).